Here is a 197-residue protein sequence, read N- to C-terminus: Ubiquitin-conjugating enzyme E2 T (197 aa).

In terms of domain architecture, UBC core spans 2-152; that stretch reads QRASRLKREL…ARQWTEKHAR (151 aa). Cys86 acts as the Glycyl thioester intermediate in catalysis. Glycyl lysine isopeptide (Lys-Gly) (interchain with G-Cter in ubiquitin) cross-links involve residues Lys91 and Lys182. The interval 149–197 is disordered; that stretch reads KHARQKQKADEEEMLDNLPEAGDSRVHNSTQKRKASQLVGIEKKFHPDV. Ser184 is subject to Phosphoserine. Residues Lys191 and Lys192 each participate in a glycyl lysine isopeptide (Lys-Gly) (interchain with G-Cter in SUMO2) cross-link.

Belongs to the ubiquitin-conjugating enzyme family. Directly interacts with FANCL. Interacts with BRCA1. Auto-ubiquitinated. Effects of auto-monoubiquitination at Lys-91 and Lys-182 are unclear: according to a report, monoubiquitination inactivates E2 enzyme activity. In contrast, according to another report, autoubiquitination does not affect E2 enzyme activity.

It is found in the nucleus. It catalyses the reaction S-ubiquitinyl-[E1 ubiquitin-activating enzyme]-L-cysteine + [E2 ubiquitin-conjugating enzyme]-L-cysteine = [E1 ubiquitin-activating enzyme]-L-cysteine + S-ubiquitinyl-[E2 ubiquitin-conjugating enzyme]-L-cysteine.. It participates in protein modification; protein ubiquitination. Its function is as follows. Accepts ubiquitin from the E1 complex and catalyzes its covalent attachment to other proteins. Catalyzes monoubiquitination. Involved in mitomycin-C (MMC)-induced DNA repair. Acts as a specific E2 ubiquitin-conjugating enzyme for the Fanconi anemia complex by associating with E3 ubiquitin-protein ligase FANCL and catalyzing monoubiquitination of FANCD2, a key step in the DNA damage pathway. Also mediates monoubiquitination of FANCL and FANCI. May contribute to ubiquitination and degradation of BRCA1. In vitro able to promote polyubiquitination using all 7 ubiquitin Lys residues, but may prefer 'Lys-11'-, 'Lys-27'-, 'Lys-48'- and 'Lys-63'-linked polyubiquitination. This is Ubiquitin-conjugating enzyme E2 T (UBE2T) from Homo sapiens (Human).